The primary structure comprises 265 residues: Capsule polysaccharide export inner-membrane protein BexB (265 aa).

Transmembrane regions (helical) follow at residues 37–57 (IGFLWLFVEPLLMTFFIVMMW), 64–84 (KFSTLNMIAFVMTGYPMAMMW), 121–141 (VAGASIAQILFMAVLVLIGWI), 148–168 (FYMLMAWFLMAMFAFALGLII), 178–198 (FGKIWGTLSFVLLPISGAFFF), and 235–255 (ESIGFLVVSDLALLLMGLVMV). The ABC transmembrane type-2 domain maps to 37–258 (IGFLWLFVEP…LMGLVMVKNF (222 aa)).

It belongs to the ABC-2 integral membrane protein family.

Its subcellular location is the cell inner membrane. Its function is as follows. May form an ATP-driven capsule polysaccharide export apparatus, in association with the BexA, BexC and BexD proteins. In Haemophilus influenzae, this protein is Capsule polysaccharide export inner-membrane protein BexB (bexB).